Consider the following 236-residue polypeptide: uncharacterized protein (236 aa).

The HTH gntR-type domain maps to 1–69 (MLKYQQIATE…RGSGIFVRKH (69 aa)). The H-T-H motif DNA-binding region spans 29–48 (LETLMAQFEVSKSTITKSLE).

This is an uncharacterized protein from Bacillus subtilis (strain 168).